We begin with the raw amino-acid sequence, 286 residues long: 4-hydroxybenzoate octaprenyltransferase (286 aa).

Helical transmembrane passes span 22 to 42 (IGTLLLLWPTLWALYLAEKAM), 45 to 65 (LSVLAIFICGVFLMRSAGCVI), 98 to 118 (LFIVLVFCSFLLVLCLNLYTI), 143 to 163 (FFLGAAFGWSIPMAYGATIEA), 213 to 233 (IIALLQIITLIFLFSVGYLSQ), 238 to 255 (YFIVLAIAGLFFVYQCRL), and 266 to 286 (NAFLNNNYFGLTVFIAVLFGI).

Belongs to the UbiA prenyltransferase family. It depends on Mg(2+) as a cofactor.

The protein localises to the cell inner membrane. The enzyme catalyses all-trans-octaprenyl diphosphate + 4-hydroxybenzoate = 4-hydroxy-3-(all-trans-octaprenyl)benzoate + diphosphate. It functions in the pathway cofactor biosynthesis; ubiquinone biosynthesis. Functionally, catalyzes the prenylation of para-hydroxybenzoate (PHB) with an all-trans polyprenyl group. Mediates the second step in the final reaction sequence of ubiquinone-8 (UQ-8) biosynthesis, which is the condensation of the polyisoprenoid side chain with PHB, generating the first membrane-bound Q intermediate 3-octaprenyl-4-hydroxybenzoate. This chain is 4-hydroxybenzoate octaprenyltransferase, found in Histophilus somni (strain 129Pt) (Haemophilus somnus).